The primary structure comprises 920 residues: Translation initiation factor IF-2 (920 aa).

The interval 33–305 (KSASSTVEAP…RGRKSKRAKR (273 aa)) is disordered. Low complexity predominate over residues 53–86 (SKSAPAPAKSAGNGATAAPATSATPATAAAAAAP). 3 stretches are compositionally biased toward pro residues: residues 87-159 (APAP…PAPR), 179-193 (PRPQPRPGAPRPGTP), and 201-212 (NMPPRPAGPRPG). Positions 225–291 (PGGRGPGGGG…GAAGAFGRPG (67 aa)) are enriched in gly residues. Residues 295-304 (KRGRKSKRAK) are compositionally biased toward basic residues. The region spanning 416-588 (IRPPVVTVMG…VLLTADASLD (173 aa)) is the tr-type G domain. A G1 region spans residues 425–432 (GHVDHGKT). 425–432 (GHVDHGKT) serves as a coordination point for GTP. Residues 450-454 (GITQH) are G2. A G3 region spans residues 475 to 478 (DTPG). GTP contacts are provided by residues 475 to 479 (DTPGH) and 529 to 532 (NKID). Residues 529–532 (NKID) are G4. The segment at 565-567 (SAK) is G5.

Belongs to the TRAFAC class translation factor GTPase superfamily. Classic translation factor GTPase family. IF-2 subfamily.

It is found in the cytoplasm. In terms of biological role, one of the essential components for the initiation of protein synthesis. Protects formylmethionyl-tRNA from spontaneous hydrolysis and promotes its binding to the 30S ribosomal subunits. Also involved in the hydrolysis of GTP during the formation of the 70S ribosomal complex. The protein is Translation initiation factor IF-2 of Mycobacterium sp. (strain JLS).